The chain runs to 495 residues: Probable polyamine transporter At1g31830 (495 aa).

A run of 11 helical transmembrane segments spans residues 49–69 (VSML…PFGV), 79–99 (LLAL…EALI), 112–132 (GYVV…QGWM), 156–176 (VPAL…TILL), 186–206 (IVGW…AVMG), 230–250 (LYLN…TLAG), 267–287 (VILV…AIPL), 357–377 (TPLL…WLSF), 380–400 (IVAA…IAFV), 417–437 (IGTT…CAVV), and 442–462 (LKVA…HPLL).

It belongs to the amino acid-polyamine-organocation (APC) superfamily. Polyamine:cation symporter (PHS) (TC 2.A.3.12) family.

The protein resides in the cell membrane. Probable cell membrane polyamine/proton symporter involved in the polyamine uptake in cells. The sequence is that of Probable polyamine transporter At1g31830 from Arabidopsis thaliana (Mouse-ear cress).